We begin with the raw amino-acid sequence, 431 residues long: Glucose-1-phosphate adenylyltransferase (431 aa).

Lys-39 provides a ligand contact to beta-D-fructose 1,6-bisphosphate. The AMP site is built by Arg-40, His-46, and Arg-52. Tyr-114 provides a ligand contact to alpha-D-glucose 1-phosphate. Arg-130 is a binding site for AMP. Alpha-D-glucose 1-phosphate contacts are provided by residues Gly-179, 194-195, and Ser-212; that span reads EK. Residues Glu-370 and Arg-386 each contribute to the AMP site. Residues 419 to 423 and 429 to 431 each bind beta-D-fructose 1,6-bisphosphate; these read REMLR and QER.

It belongs to the bacterial/plant glucose-1-phosphate adenylyltransferase family. As to quaternary structure, homotetramer.

It catalyses the reaction alpha-D-glucose 1-phosphate + ATP + H(+) = ADP-alpha-D-glucose + diphosphate. Its pathway is glycan biosynthesis; glycogen biosynthesis. Allosterically activated by fructose-1,6-bisphosphate (F16BP) and inhibited by AMP. In terms of biological role, involved in the biosynthesis of ADP-glucose, a building block required for the elongation reactions to produce glycogen. Catalyzes the reaction between ATP and alpha-D-glucose 1-phosphate (G1P) to produce pyrophosphate and ADP-Glc. The chain is Glucose-1-phosphate adenylyltransferase from Salmonella paratyphi A (strain ATCC 9150 / SARB42).